The chain runs to 1472 residues: Vacuolar cation-transporting ATPase YPK9 (1472 aa).

The residue at position 1 (M1) is an N-acetylmethionine. 2 stretches are compositionally biased toward polar residues: residues 1–12 (MDIPSSNQIQHG) and 72–87 (SFQS…SGNL). 3 disordered regions span residues 1 to 32 (MDIP…TATT), 71 to 115 (HSFQ…SRNP), and 179 to 273 (AKSY…DDVH). Residues 1-293 (MDIPSSNQIQ…YHEKFYPQYA (293 aa)) are Cytoplasmic-facing. A Phosphothreonine modification is found at T95. 2 stretches are compositionally biased toward low complexity: residues 103 to 115 (SSAE…SRNP) and 211 to 222 (SATHSSSSLSRY). A Phosphoserine modification is found at S108. Positions 234–243 (SQTDEILEDE) are enriched in acidic residues. Residues 294–315 (PNLHYQRFYIAEEDLVIGIAAY) traverse the membrane as a helical segment. Over 316–321 (QTSKFW) the chain is Vacuolar. A helical transmembrane segment spans residues 322–344 (YIIYNLCCFLTFGLVYLLTRWLP). Topologically, residues 345–488 (HLKVKLYGVK…INLRMKTTSE (144 aa)) are cytoplasmic. A helical membrane pass occupies residues 489–511 (ILFNEVLHPFYVFQVFSIILWGI). Residues 512-514 (DEY) lie on the Vacuolar side of the membrane. A helical transmembrane segment spans residues 515–533 (YYYAACIFLISVLSIFDSL). Over 534 to 693 (NEQKKVSRNL…PTGFKFYRDS (160 aa)) the chain is Cytoplasmic. A helical membrane pass occupies residues 694-713 (FKYIGFMSLIAIFGFCVSCV). The Vacuolar portion of the chain corresponds to 714 to 726 (QFIKLGLDKKTMI). Residues 727-748 (LRALDIITIVVPPALPATLTIG) traverse the membrane as a helical segment. Over 749-1244 (TNFALSRLKE…ALVTSFACFQ (496 aa)) the chain is Cytoplasmic. Residue D781 is the 4-aspartylphosphate intermediate of the active site. Residues S1117 and S1120 each carry the phosphoserine modification. Positions 1187 and 1191 each coordinate Mg(2+). A helical membrane pass occupies residues 1245–1264 (YMSLYSAIQFITITILYSRG). The Vacuolar segment spans residues 1265 to 1271 (SNLGDFQ). Residues 1272–1289 (FLYIDLLLIVPIAICMSW) form a helical membrane-spanning segment. Residues 1290 to 1307 (SKSYEKIDKKRPSANLVS) are Cytoplasmic-facing. The chain crosses the membrane as a helical span at residues 1308–1331 (PKILVPLLISVFLVFLFQFIPWII). The Vacuolar portion of the chain corresponds to 1332–1351 (VQKMSWYIKPIVGGDDAVQS). A helical membrane pass occupies residues 1352 to 1374 (SDNTVLFFVSNFQYILTAIVLSV). Topologically, residues 1375–1387 (GPPYREPMSKNFE) are cytoplasmic. Residues 1388–1407 (FIVDITVSIGASLLLMTLDT) traverse the membrane as a helical segment. At 1408 to 1423 (ESYLGKMLQLTPISNS) the chain is on the vacuolar side. A helical transmembrane segment spans residues 1424–1446 (FTMFIIVWVILNYYAQLYIPPSI). Topologically, residues 1447-1472 (KGWLKKKKSSKKYKLLIQEEMKLKEV) are cytoplasmic.

It belongs to the cation transport ATPase (P-type) (TC 3.A.3) family. Type V subfamily.

It is found in the vacuole membrane. The enzyme catalyses ATP + H2O = ADP + phosphate + H(+). Its function is as follows. Vacuolar transporter which plays a role in sequestration of divalent heavy metal ions. The sequence is that of Vacuolar cation-transporting ATPase YPK9 (YPK9) from Saccharomyces cerevisiae (strain ATCC 204508 / S288c) (Baker's yeast).